The sequence spans 380 residues: MKPMTSDVMPAAERKVRVDLAERSYDILIGPGLIAAAGGEIASRLKGRKMAVITDENVAPRYLEPLMASLAGSGMDPVSLILPAGEKTKSFEHLIPVCEAVLGARIERNDAVIALGGGVIGDLTGFAAGIVRRGSRFIQIPTSLLAQVDSSVGGKTGINSPHGKNLIGVFHQPDLVLADTAALDTLSPREFRAGYAEVVKYGLIDKPDFFEWLEQNWQAVFAGGPARIEAIAVSCQAKADVVAADERENGLRALLNLGHTFGHALEAATGYDSKRLVHGEGVAIGMVLAHEFSARMNIASPDDARRVEMHLKTVGLPTRMADIPGMLPPADRLLEAIAQDKKVKGGKFTFILTRGIGQSFIADDVPSSEVLSFLEERIPR.

NAD(+)-binding positions include Gly118–Asp122, Thr142–Ser143, Lys155, and Lys164. Glu197, His259, and His278 together coordinate Zn(2+).

It belongs to the sugar phosphate cyclases superfamily. Dehydroquinate synthase family. Co(2+) is required as a cofactor. Requires Zn(2+) as cofactor. The cofactor is NAD(+).

It localises to the cytoplasm. The enzyme catalyses 7-phospho-2-dehydro-3-deoxy-D-arabino-heptonate = 3-dehydroquinate + phosphate. It functions in the pathway metabolic intermediate biosynthesis; chorismate biosynthesis; chorismate from D-erythrose 4-phosphate and phosphoenolpyruvate: step 2/7. Functionally, catalyzes the conversion of 3-deoxy-D-arabino-heptulosonate 7-phosphate (DAHP) to dehydroquinate (DHQ). The polypeptide is 3-dehydroquinate synthase (Sinorhizobium medicae (strain WSM419) (Ensifer medicae)).